We begin with the raw amino-acid sequence, 662 residues long: MSYKANQPSPGEMPKRSPSILVTDARTSKNRMSAPFAGHAAGSRKNMENAGVTKSQGVRSSAIGPSPLQSFTHPRRRSSGRFSDISIDNILSDNSDIPSARREERLSSSSSDRPRQYERLSSRRKMINPLPPRTSKTSQKLVLIPEDDNLNHFQTLPTNALDRQRPKVGSMKSNSFDRLPRYSKEKSMARITAYNVADGFNLNQLYKFLQETHEVSPRLYDECLYVAYTLPLLPGKGGFRIKSNLSKKTMGGKTLIDNLIDTSEQRDHHYEYYSGVETVEDANNNYELETSGNNNNANQDTTTVPDHLPNPVGQQDSFNPMEPQFFAEETPLEIEKRERTERINMLKKEENDSDASCGNDNNNKNNDKSKLYAVEGNDQYVQSSRSPASPSSISTPSPPSSSQNDFDRVYKMHRDNDHEGNDRHAEIFIFHYGVIVFWNFTEIQEKNILGDITFADYKNLMIRPLDEQDIETEQFHFEYDRDTERPRIFNDIVTLRSGDHIIELTLSHAIAQSSKLSRFESRISPILISVTKLPKRLALYGTLGLKREQLLKKSGKLFKLRVDVNLSSTILDTPEFFWSFEPSLHPLYVAMREYLEIDQRVQVLNDRCKVFLEFFDICVDSVAERNMARVTWWFILVILFGVIFSLTEIFVRYVIIHRHTST.

Disordered stretches follow at residues 1–136 (MSYK…RTSK), 286–320 (YELE…SFNP), and 346–406 (LKKE…QNDF). S2 bears the N-acetylserine mark. Residues 99-121 (SARREERLSSSSSDRPRQYERLS) show a composition bias toward basic and acidic residues. Polar residues predominate over residues 286–304 (YELETSGNNNNANQDTTTV). Residues 383 to 395 (SSRSPASPSSIST) show a composition bias toward low complexity. The helical transmembrane segment at 630 to 647 (VTWWFILVILFGVIFSLT) threads the bilayer.

This sequence belongs to the RMD1/sif2 family.

It localises to the membrane. Its function is as follows. Required for sporulation. This is Sporulation protein RMD8 (RMD8) from Saccharomyces cerevisiae (strain ATCC 204508 / S288c) (Baker's yeast).